A 193-amino-acid chain; its full sequence is ATP synthase subunit delta (193 aa).

The protein belongs to the ATPase delta chain family. F-type ATPases have 2 components, F(1) - the catalytic core - and F(0) - the membrane proton channel. F(1) has five subunits: alpha(3), beta(3), gamma(1), delta(1), epsilon(1). F(0) has three main subunits: a(1), b(2) and c(10-14). The alpha and beta chains form an alternating ring which encloses part of the gamma chain. F(1) is attached to F(0) by a central stalk formed by the gamma and epsilon chains, while a peripheral stalk is formed by the delta and b chains.

It is found in the cell inner membrane. Its function is as follows. F(1)F(0) ATP synthase produces ATP from ADP in the presence of a proton or sodium gradient. F-type ATPases consist of two structural domains, F(1) containing the extramembraneous catalytic core and F(0) containing the membrane proton channel, linked together by a central stalk and a peripheral stalk. During catalysis, ATP synthesis in the catalytic domain of F(1) is coupled via a rotary mechanism of the central stalk subunits to proton translocation. Functionally, this protein is part of the stalk that links CF(0) to CF(1). It either transmits conformational changes from CF(0) to CF(1) or is implicated in proton conduction. This is ATP synthase subunit delta from Allorhizobium ampelinum (strain ATCC BAA-846 / DSM 112012 / S4) (Agrobacterium vitis (strain S4)).